The sequence spans 302 residues: Ribosomal RNA small subunit methyltransferase H (302 aa).

S-adenosyl-L-methionine is bound by residues 43–45 (GGH), Asp62, Phe89, Asp105, and His112. The segment at 276–302 (EIANNPRSRSAKLRIAEKQAETGDEDN) is disordered.

This sequence belongs to the methyltransferase superfamily. RsmH family.

It is found in the cytoplasm. It carries out the reaction cytidine(1402) in 16S rRNA + S-adenosyl-L-methionine = N(4)-methylcytidine(1402) in 16S rRNA + S-adenosyl-L-homocysteine + H(+). Functionally, specifically methylates the N4 position of cytidine in position 1402 (C1402) of 16S rRNA. This Nostoc sp. (strain PCC 7120 / SAG 25.82 / UTEX 2576) protein is Ribosomal RNA small subunit methyltransferase H.